Here is a 466-residue protein sequence, read N- to C-terminus: Ribosomal protein uS12 methylthiotransferase RimO (466 aa).

In terms of domain architecture, MTTase N-terminal spans 18–133 (PRIGFVSLGC…VMDAVHQHVP (116 aa)). Cys27, Cys63, Cys92, Cys164, Cys168, and Cys171 together coordinate [4Fe-4S] cluster. A Radical SAM core domain is found at 150 to 391 (LTPKHYAYLK…MAVAEAVSTA (242 aa)). Residues 394–466 (QRRVGSSMQV…QGHDLIGELI (73 aa)) form the TRAM domain.

The protein belongs to the methylthiotransferase family. RimO subfamily. Requires [4Fe-4S] cluster as cofactor.

Its subcellular location is the cytoplasm. The catalysed reaction is L-aspartate(89)-[ribosomal protein uS12]-hydrogen + (sulfur carrier)-SH + AH2 + 2 S-adenosyl-L-methionine = 3-methylsulfanyl-L-aspartate(89)-[ribosomal protein uS12]-hydrogen + (sulfur carrier)-H + 5'-deoxyadenosine + L-methionine + A + S-adenosyl-L-homocysteine + 2 H(+). Its function is as follows. Catalyzes the methylthiolation of an aspartic acid residue of ribosomal protein uS12. This Leptothrix cholodnii (strain ATCC 51168 / LMG 8142 / SP-6) (Leptothrix discophora (strain SP-6)) protein is Ribosomal protein uS12 methylthiotransferase RimO.